Here is a 370-residue protein sequence, read N- to C-terminus: Probable G-protein coupled receptor 85 (370 aa).

Over 1–25 (MANYSHAADNILQNLSPLTAFLKLT) the chain is Extracellular. Residue Asn-3 is glycosylated (N-linked (GlcNAc...) asparagine). The helical transmembrane segment at 26–46 (SLGFIIGVSVVGNLLISILLV) threads the bilayer. Topologically, residues 47 to 57 (KDKTLHRAPYY) are cytoplasmic. The helical transmembrane segment at 58 to 78 (FLLDLCCSDILRSAICFPFVF) threads the bilayer. Residues 79 to 96 (NSVKNGSTWTYGTLTCKV) are Extracellular-facing. N-linked (GlcNAc...) asparagine glycosylation is present at Asn-83. A disulfide bond links Cys-94 and Cys-172. A helical membrane pass occupies residues 97-117 (IAFLGVLSCFHTAFMLFCISV). Topologically, residues 118-137 (TRYLAIAHHRFYTKRLTFWT) are cytoplasmic. Residues 138-158 (CLAVICMVWTLSVAMAFPPVL) form a helical membrane-spanning segment. The Extracellular portion of the chain corresponds to 159–188 (DVGTYSFIREEDQCTFQHRSFRANDSLGFM). A glycan (N-linked (GlcNAc...) asparagine) is linked at Asn-182. The chain crosses the membrane as a helical span at residues 189 to 209 (LLLALILLATQLVYLKLIFFV). Residues 210 to 286 (HDRRKMKPVQ…FKMEKRISRM (77 aa)) are Cytoplasmic-facing. Residues 287–307 (FYIMTFLFLTLWGPYLVACYW) form a helical membrane-spanning segment. The Extracellular segment spans residues 308-313 (RVFARG). A helical membrane pass occupies residues 314-334 (PVVPGGFLTAAVWMSFAQAGI). Over 335–370 (NPFVCIFSNRELRRCFSTTLLYCRKSRLPREPYCVI) the chain is Cytoplasmic.

It belongs to the G-protein coupled receptor 1 family. Interacts with DLG4 and DLG3. In terms of tissue distribution, highly expressed in brain and testis. Lower levels in small intestine, placenta and spleen. In brain regions, detected in all regions tested, but somewhat lower levels in the corpus callosum, medulla and spinal cord.

The protein localises to the cell membrane. Its subcellular location is the endoplasmic reticulum. Orphan receptor. This is Probable G-protein coupled receptor 85 (GPR85) from Homo sapiens (Human).